Here is a 280-residue protein sequence, read N- to C-terminus: Nucleotide-binding protein Dgeo_0723 (280 aa).

8–15 serves as a coordination point for ATP; the sequence is GLSGSGKS. 57–60 contacts GTP; the sequence is DART.

Belongs to the RapZ-like family.

Functionally, displays ATPase and GTPase activities. The chain is Nucleotide-binding protein Dgeo_0723 from Deinococcus geothermalis (strain DSM 11300 / CIP 105573 / AG-3a).